The following is a 245-amino-acid chain: Putative outer membrane protein RBE_0022 (245 aa).

Residues 1-23 (MIRMSKRLGVILFVSCISINSFA) form the signal peptide.

This sequence belongs to the OmpW/AlkL family.

Its subcellular location is the cell outer membrane. The sequence is that of Putative outer membrane protein RBE_0022 from Rickettsia bellii (strain RML369-C).